The following is a 376-amino-acid chain: uncharacterized protein (376 aa).

This sequence belongs to the mimivirus R1 family.

This is an uncharacterized protein from Acanthamoeba polyphaga (Amoeba).